The sequence spans 592 residues: MCVNRVRSIVSLTLIAYLSVLMGVSVYFYVLIESVYQQFSDMSENYVQLVKDTSSTPIVVATHGHSTNRSHQSVLFTARADVNISMETILHVEFNYTTALGTMDDTFNIINFYGLKYRHVDLIDPFGNSLPVVNSKSSFGFTDCSSDERVRCPSTRRPFTGTLDCLTLDMHMQSWNRDRSTDHFKRPIIIWLGEIMGSLWRLIGNGVIVIRVNYRRGVYGFVCHRDERLPYYNQGVNDVMHAIEWVTENAERFAGDTKRITLAGHGDDGKVVEYVRMYHSHHLPLDKYIVMSAAETGSRDLTCSSNSNILVTAARILGMPSVPVHDTTAGERGVYDAVRYLSFIEPKRLMERLYDLKEIFQPCPGEIRSTASDVNGLGKAFEGVDSDDCKFINTDTPVLYMNTLNEYANKVKLDDSFMHARAHTLRRVIEHVLARRFKPHRVTRYCNVTISEPAEIGSERYEPCDGEVINVESLGRVLTDFEYIAPTSRICEAAVGCGASFYHYVYDFKNASHGDDLRLLMSEHDQRNLTKFERQLADGIGMMISRFVRRGYPVVKRDNWCSSTSLVAQIMEINTTPNVITTQTQVRGTVER.

Residues 12–32 (LTLIAYLSVLMGVSVYFYVLI) form a helical membrane-spanning segment. Residues Asn-68, Asn-83, Asn-95, Asn-447, and Asn-510 are each glycosylated (N-linked (GlcNAc...) asparagine; by host). The active-site Charge relay system is His-513. An N-linked (GlcNAc...) asparagine; by host glycan is attached at Asn-528.

Belongs to the type-B carboxylesterase/lipase family.

The protein localises to the membrane. It catalyses the reaction a carboxylic ester + H2O = an alcohol + a carboxylate + H(+). The sequence is that of Putative esterase from Spodoptera frugiperda (Fall armyworm).